Here is a 291-residue protein sequence, read N- to C-terminus: Ribosomal RNA small subunit methyltransferase H (291 aa).

S-adenosyl-L-methionine-binding positions include Gly31–Tyr33, Asp49, Phe76, Asp97, and Gln104.

It belongs to the methyltransferase superfamily. RsmH family.

It is found in the cytoplasm. The enzyme catalyses cytidine(1402) in 16S rRNA + S-adenosyl-L-methionine = N(4)-methylcytidine(1402) in 16S rRNA + S-adenosyl-L-homocysteine + H(+). Specifically methylates the N4 position of cytidine in position 1402 (C1402) of 16S rRNA. In Anaplasma marginale (strain St. Maries), this protein is Ribosomal RNA small subunit methyltransferase H.